The chain runs to 130 residues: Small ribosomal subunit protein uS9 (130 aa).

Residues 102-130 (GFLTRDPRMKERKKYGLKKARRSPQFSKR) are disordered. The span at 111–130 (KERKKYGLKKARRSPQFSKR) shows a compositional bias: basic residues.

This sequence belongs to the universal ribosomal protein uS9 family.

The polypeptide is Small ribosomal subunit protein uS9 (Clostridium botulinum (strain ATCC 19397 / Type A)).